We begin with the raw amino-acid sequence, 509 residues long: ATP synthase subunit alpha (509 aa).

ATP is bound at residue 169–176; it reads GDRQTGKT.

This sequence belongs to the ATPase alpha/beta chains family. In terms of assembly, F-type ATPases have 2 components, CF(1) - the catalytic core - and CF(0) - the membrane proton channel. CF(1) has five subunits: alpha(3), beta(3), gamma(1), delta(1), epsilon(1). CF(0) has three main subunits: a(1), b(2) and c(9-12). The alpha and beta chains form an alternating ring which encloses part of the gamma chain. CF(1) is attached to CF(0) by a central stalk formed by the gamma and epsilon chains, while a peripheral stalk is formed by the delta and b chains.

The protein localises to the cell inner membrane. It carries out the reaction ATP + H2O + 4 H(+)(in) = ADP + phosphate + 5 H(+)(out). In terms of biological role, produces ATP from ADP in the presence of a proton gradient across the membrane. The alpha chain is a regulatory subunit. The chain is ATP synthase subunit alpha from Brucella abortus (strain S19).